Reading from the N-terminus, the 778-residue chain is MNKKSLPLMALRDMVVFPGVIAPIFVGRQKSLQALSHTTVSEEDNSKYILVTLQKKFDQENPSKHELNNTAILAKIIQIVKLPNNTAKILIEAVARVKLSNIKGNDAFEANYEIIPDEEIFDVNNMRSLVDNAVQLFSKYAINDKKVNAEIIETINKEISNSTNFINIINILASHLITSLEAKQHLLEETSPFKRITTVISTLTSNIVNSETEQALQQRVRKQIEKTQRDYYLHEQMKAIQKELDEDKSELADIEKKIKSLKLSKEAKEKAESELKKLRSMNQMSAESGVTRNYLETLLSLPWGKYDNSKIDINQAEKILNRDHFGLEKVKERIIEYLAVLQRSSKIRGPILCLIGPPGVGKTSLVKSIAEGMGRKYTKFALGGVRDEAEIRGHRKTYLGSTPGKILGQLKKVKTSNPVMLLDEIDKMSSDFRGDPASALLEVLDPEQNSHFVDHYLEVEYDLSNVIFIATANSHDLPRALSDRMEKIYISGYVEEEKLQIAKNYLVPKQFKMHKIKKDEITISETAILDLIRYYTKESGVRALEREIGALTRKALKQILADKTVKHIAIDSSNLEEFLEAKKYNFGLAEKEDQIGSTTGLAYTEVGGELLTIEALAFPGKGEIKTTGKLGDVMKESAMAAYSCFRSRATNFGLKYDNYKDFDIHIHVPAGAIPKDGPSAGCALFTTIVSLMTKIPVHRTVAMTGEITLRGNVLPIGGLKEKLLAASRGGIKTVLIPEENVKDLKDIPPNIKESLEIISVSNIDQVLKHALVETPINK.

A Lon N-terminal domain is found at 6–207 (LPLMALRDMV…TVISTLTSNI (202 aa)). Position 356 to 363 (356 to 363 (GPPGVGKT)) interacts with ATP. A Lon proteolytic domain is found at 592–773 (EDQIGSTTGL…DQVLKHALVE (182 aa)). Active-site residues include Ser679 and Lys722.

This sequence belongs to the peptidase S16 family. As to quaternary structure, homohexamer. Organized in a ring with a central cavity.

It localises to the cytoplasm. It carries out the reaction Hydrolysis of proteins in presence of ATP.. In terms of biological role, ATP-dependent serine protease that mediates the selective degradation of mutant and abnormal proteins as well as certain short-lived regulatory proteins. Required for cellular homeostasis and for survival from DNA damage and developmental changes induced by stress. Degrades polypeptides processively to yield small peptide fragments that are 5 to 10 amino acids long. Binds to DNA in a double-stranded, site-specific manner. This Rickettsia felis (strain ATCC VR-1525 / URRWXCal2) (Rickettsia azadi) protein is Lon protease.